A 225-amino-acid chain; its full sequence is LysM and putative peptidoglycan-binding domain-containing protein 1 (225 aa).

Residues Ser-23 and Ser-33 each carry the phosphoserine modification. Positions 40 to 84 constitute a LysM domain; that stretch reads LEHQLAPGDTLAGLALKYGVTMEQIKRANRLYTNDSIFLKKTLHI. A disordered region spans residues 97-153; sequence LDSEEEKDGEEAVQPSKDEVRPHSAERKKRERGLGHANGEPLPTAGQEPARHDLSAS. Positions 98–107 are enriched in acidic residues; sequence DSEEEKDGEE. Phosphoserine is present on Ser-99. A compositionally biased stretch (basic and acidic residues) spans 112–121; the sequence is SKDEVRPHSA. Residues Ser-164, Ser-179, Ser-192, and Ser-210 each carry the phosphoserine modification. Residues 170–225 form a disordered region; the sequence is AAQKLKKGESGIPGEDSSLHLSSPRMQQRAVLGPVPLTQTSRTRTLRDQEDEIFKL. The span at 214 to 225 shows a compositional bias: basic and acidic residues; that stretch reads TLRDQEDEIFKL.

This is LysM and putative peptidoglycan-binding domain-containing protein 1 (LYSMD1) from Bos taurus (Bovine).